The chain runs to 88 residues: Small ribosomal subunit protein uS17c (88 aa).

Belongs to the universal ribosomal protein uS17 family. As to quaternary structure, part of the 30S ribosomal subunit.

It localises to the plastid. It is found in the cyanelle. In terms of biological role, one of the primary rRNA binding proteins, it binds specifically to the 5'-end of 16S ribosomal RNA. The sequence is that of Small ribosomal subunit protein uS17c (rps17) from Cyanophora paradoxa.